The sequence spans 451 residues: Transcription factor TGAL8 (451 aa).

The span at 1-22 (MAYPSTSGMIQASSSLHGSITR) shows a compositional bias: polar residues. Disordered stretches follow at residues 1 to 32 (MAYP…DMPS) and 70 to 151 (FPSQ…PKTL). Positions 141 to 150 (KGPKTPDPKT) are enriched in basic and acidic residues. The bZIP domain maps to 147–191 (DPKTLRRLAQNREAARKSRLRKKAYIQQLETGRIRLAHLEQEIQF). The basic motif stretch occupies residues 149–169 (KTLRRLAQNREAARKSRLRKK). The leucine-zipper stretch occupies residues 175–189 (LETGRIRLAHLEQEI). One can recognise a DOG1 domain in the interval 208–444 (AALFNLEYER…RALALFWTTT (237 aa)).

The protein belongs to the bZIP family. In terms of assembly, interacts with NPR5/NH4, NH5.1 and NH5.2.

The protein resides in the nucleus. Transcriptional regulator involved in defense response. This Oryza sativa subsp. japonica (Rice) protein is Transcription factor TGAL8.